Consider the following 254-residue polypeptide: MLAKRILPCLDVNKGRVVKGVNFVNLQDAGDPVELARLYNQAGADELVFLDITATHEDRDTIIDVVYRTAEQVFIPLTVGGGIQSLENIKNLLRAGADKVSINSAAVREPELLDRASDRFGKQCIVVAIDARRRKDEHNPGWEVYVRGGRKNTGIDALLWAQEVEKRGAGELLVTSMDADGTQAGYDLALTKAIAERVEIPVIASGGAGNCQHIYEALTEGRAEAALLASLLHYGQLTIAEVKNYLQNQQVPVR.

Catalysis depends on residues D11 and D130.

It belongs to the HisA/HisF family. As to quaternary structure, heterodimer of HisH and HisF.

It is found in the cytoplasm. The enzyme catalyses 5-[(5-phospho-1-deoxy-D-ribulos-1-ylimino)methylamino]-1-(5-phospho-beta-D-ribosyl)imidazole-4-carboxamide + L-glutamine = D-erythro-1-(imidazol-4-yl)glycerol 3-phosphate + 5-amino-1-(5-phospho-beta-D-ribosyl)imidazole-4-carboxamide + L-glutamate + H(+). It participates in amino-acid biosynthesis; L-histidine biosynthesis; L-histidine from 5-phospho-alpha-D-ribose 1-diphosphate: step 5/9. IGPS catalyzes the conversion of PRFAR and glutamine to IGP, AICAR and glutamate. The HisF subunit catalyzes the cyclization activity that produces IGP and AICAR from PRFAR using the ammonia provided by the HisH subunit. This chain is Imidazole glycerol phosphate synthase subunit HisF, found in Microcystis aeruginosa (strain NIES-843 / IAM M-2473).